A 390-amino-acid polypeptide reads, in one-letter code: Probable splicing factor YJU2B (390 aa).

Residues Asp354–Val390 are disordered.

This sequence belongs to the CWC16 family.

It is found in the nucleus. In terms of biological role, may be involved in mRNA splicing. This chain is Probable splicing factor YJU2B (yju2b), found in Danio rerio (Zebrafish).